The sequence spans 281 residues: MAEEIVVEPESLREIEHIVLVLSGKGGVGKSSVTTQLGMALACRGLKVGILDIDLTGPSLPRMVGMEGKSVLQGPRGWIPVDVPTGMEQGCLRVMSLGFLLDDRGDSVVWRGPKKTAMIKQFISDVYWGALDYLLIDTPPGTSDEHISIAEELRGARPDGAIIVSTPQKVAVADVKKEINFCRKVNFKLLGVVENMSGFVCPHCSECTNIFARGGGESLALESGVPFLGTVPIDPAFVEMIESQSSREEPLISLYKTSGLYPIFARIVQHVLDQGIPSRCQ.

24–31 contacts ATP; it reads GKGGVGKS. C201 and C204 together coordinate [4Fe-4S] cluster.

It belongs to the Mrp/NBP35 ATP-binding proteins family. NUBP2/CFD1 subfamily. In terms of assembly, heterotetramer of 2 NBP35 and 2 CFD1 chains. Requires [4Fe-4S] cluster as cofactor.

The protein localises to the cytoplasm. Component of the cytosolic iron-sulfur (Fe/S) protein assembly (CIA) machinery. Required for maturation of extramitochondrial Fe-S proteins. The NBP35-CFD1 heterotetramer forms a Fe-S scaffold complex, mediating the de novo assembly of an Fe-S cluster and its transfer to target apoproteins. Required for biogenesis and export of both ribosomal subunits, which may reflect a role in assembly of the Fe/S clusters in RLI1, a protein which performs rRNA processing and ribosome export. The chain is Cytosolic Fe-S cluster assembly factor CFD1 from Eremothecium gossypii (strain ATCC 10895 / CBS 109.51 / FGSC 9923 / NRRL Y-1056) (Yeast).